The primary structure comprises 320 residues: MARNKIALIGSGMIGGTLAHLAGLKELGDIVLFDIADGIPQGKGLDIAQSSPVEGFDANLTGASDYSAIEGADVCIVTAGVARKPGMSRDDLLGINLKVMEQVGAGIKKYAPNAFVICITNPLDAMVWALQKFSGLPANKVVGMAGVLDSSRFRLFLAKEFNVSVEDVTAFVLGGHGDSMVPLARYSTVAGIPLTDLVTMGWLTAERLEEIIQRTRDGGAEIVGLLKTGSAYYAPAASAIAMAESYLKDKKRVLPCAAHLDGQYGVKDMYVGVPTVIGAGGIERIIEIDLNKAEKEAFDKSVASVAGLCEACITIAPSLK.

Residues 10–15 and D34 each bind NAD(+); that span reads GSGMIG. Substrate contacts are provided by R83 and R89. NAD(+) contacts are provided by residues N96 and 119–121; that span reads ITN. Substrate is bound by residues N121 and R152. H176 serves as the catalytic Proton acceptor.

It belongs to the LDH/MDH superfamily. MDH type 3 family.

It carries out the reaction (S)-malate + NAD(+) = oxaloacetate + NADH + H(+). Functionally, catalyzes the reversible oxidation of malate to oxaloacetate. The chain is Malate dehydrogenase from Rhizobium rhizogenes (strain K84 / ATCC BAA-868) (Agrobacterium radiobacter).